The chain runs to 375 residues: RNA exonuclease 4 (375 aa).

The disordered stretch occupies residues 21–78 (KTLGSDASSSSASSSTNNRRKLSTSESTKPKRTRLDAKEKDAEGSKSCSPAPTSLPWF). The segment covering 25–35 (SDASSSSASSS) has biased composition (low complexity). The segment covering 53 to 64 (TRLDAKEKDAEG) has biased composition (basic and acidic residues). The Exonuclease domain maps to 134–297 (NYLAIDCEMV…FRSQKPKWDE (164 aa)).

The protein belongs to the REXO4 family.

Its subcellular location is the nucleus. Exoribonuclease involved in ribosome biosynthesis. Involved in the processing of ITS1, the internal transcribed spacer localized between the 18S and 5.8S rRNAs. This is RNA exonuclease 4 (REX4) from Mycosarcoma maydis (Corn smut fungus).